The chain runs to 436 residues: Tryptophan synthase beta chain (436 aa).

At Lys-129 the chain carries N6-(pyridoxal phosphate)lysine.

Belongs to the TrpB family. In terms of assembly, tetramer of two alpha and two beta chains. Pyridoxal 5'-phosphate is required as a cofactor.

It carries out the reaction (1S,2R)-1-C-(indol-3-yl)glycerol 3-phosphate + L-serine = D-glyceraldehyde 3-phosphate + L-tryptophan + H2O. It functions in the pathway amino-acid biosynthesis; L-tryptophan biosynthesis; L-tryptophan from chorismate: step 5/5. Functionally, the beta subunit is responsible for the synthesis of L-tryptophan from indole and L-serine. This Prochlorococcus marinus (strain MIT 9313) protein is Tryptophan synthase beta chain.